A 198-amino-acid polypeptide reads, in one-letter code: UPF0312 protein PFL_5802 (198 aa).

The N-terminal stretch at 1–23 is a signal peptide; that stretch reads MLKKTLAALAIGSAVLAAGQVMA.

It belongs to the UPF0312 family. Type 1 subfamily.

It is found in the periplasm. The protein is UPF0312 protein PFL_5802 of Pseudomonas fluorescens (strain ATCC BAA-477 / NRRL B-23932 / Pf-5).